The following is a 287-amino-acid chain: Pantothenate synthetase (287 aa).

Position 30–37 (30–37 (MGNLHSGH)) interacts with ATP. The Proton donor role is filled by histidine 37. Glutamine 61 provides a ligand contact to (R)-pantoate. Glutamine 61 serves as a coordination point for beta-alanine. An ATP-binding site is contributed by 149–152 (GEKD). Glutamine 155 provides a ligand contact to (R)-pantoate. Residues valine 178 and 186-189 (LSSR) each bind ATP.

This sequence belongs to the pantothenate synthetase family. As to quaternary structure, homodimer.

The protein localises to the cytoplasm. The enzyme catalyses (R)-pantoate + beta-alanine + ATP = (R)-pantothenate + AMP + diphosphate + H(+). The protein operates within cofactor biosynthesis; (R)-pantothenate biosynthesis; (R)-pantothenate from (R)-pantoate and beta-alanine: step 1/1. Functionally, catalyzes the condensation of pantoate with beta-alanine in an ATP-dependent reaction via a pantoyl-adenylate intermediate. The chain is Pantothenate synthetase from Pseudomonas putida (strain GB-1).